Reading from the N-terminus, the 343-residue chain is Probable beta-1,3-galactosyltransferase 13 (343 aa).

A helical; Signal-anchor for type II membrane protein transmembrane segment spans residues 22 to 42 (LIVFTSLAIGLTGFLFGLSTI). A glycan (N-linked (GlcNAc...) asparagine) is linked at Asn265.

Belongs to the glycosyltransferase 31 family. Mn(2+) is required as a cofactor.

The protein localises to the golgi apparatus membrane. It functions in the pathway protein modification; protein glycosylation. In terms of biological role, beta-1,3-galactosyltransferase that transfers galactose from UDP-galactose to substrates with a terminal glycosyl residue. The sequence is that of Probable beta-1,3-galactosyltransferase 13 (B3GALT13) from Arabidopsis thaliana (Mouse-ear cress).